The following is a 561-amino-acid chain: Malate synthase, glyoxysomal (561 aa).

Arg-177 serves as the catalytic Proton acceptor. The active-site Proton donor is Asp-462. The Microbody targeting signal motif lies at 559 to 561 (SRL).

Belongs to the malate synthase family.

The protein resides in the glyoxysome. It carries out the reaction glyoxylate + acetyl-CoA + H2O = (S)-malate + CoA + H(+). The protein operates within carbohydrate metabolism; glyoxylate cycle; (S)-malate from isocitrate: step 2/2. The protein is Malate synthase, glyoxysomal of Brassica napus (Rape).